Consider the following 570-residue polypeptide: MNTQILILATSAFLCVRADKICLGHHAESNGTKVDTLTEKGIEVVNATETVEQKNIPKICSKGKQTIDLGQCGLLGTIIGPPQCDQFLEFSANLIIERREGNDICYPGKFDDEETLRQILRKSGGIKKENMGFTYTGVRTNGETSACRRSRSSFYAEMKWLLSNTDNEVFPQMTKSYKNTKREPALIIWGIHHSGSTAEQTRLYGSGNKLITVWSSKYQQSFAPNPGPRPQINGQSGRIDFYWLMLDPNDTVNFSFNGAFIAPDRASFLRGKSLGIQSDAQLDNNCEGECYHIGGTIISNLPFQNINSRAIGKCPRYVKQKSLMLATGMKNVPENSTHKQLTHHMRKKRGLFGAIAGFIENGWEGLIDGWYGYRHQNAQGEGTAADYKSTQSAINQITGKLNRLIEKTNQQFELIDNEFNEIEKQIGNVINWTRDSIIEIWSYNAEFLVAVENQHTIDLTDSEMNKLYEKVRRQLRENAEEDGNGCFEIFHQCDNDCMASIRNNTYDHKKYRKEAIQNRIQIDAVKLSSGYKDVILWFSFGASCFLFLAIAMGLAFICIKNGNMRCTICI.

Positions 1 to 18 (MNTQILILATSAFLCVRA) are cleaved as a signal peptide. Over 19–533 (DKICLGHHAE…AVKLSSGYKD (515 aa)) the chain is Extracellular. 6 disulfides stabilise this stretch: Cys22–Cys486, Cys60–Cys286, Cys72–Cys84, Cys105–Cys147, Cys290–Cys314, and Cys493–Cys497. N-linked (GlcNAc...) asparagine; by host glycans are attached at residues Asn30 and Asn46. N-linked (GlcNAc...) asparagine; by host glycosylation is found at Asn249 and Asn253. N-linked (GlcNAc...) asparagine; by host glycosylation is found at Asn335 and Asn431. N-linked (GlcNAc...) asparagine; by host glycosylation occurs at Asn503. A helical membrane pass occupies residues 534-554 (VILWFSFGASCFLFLAIAMGL). Topologically, residues 555-570 (AFICIKNGNMRCTICI) are cytoplasmic. 2 S-palmitoyl cysteine; by host lipidation sites follow: Cys566 and Cys569.

This sequence belongs to the influenza viruses hemagglutinin family. Homotrimer of disulfide-linked HA1-HA2. Post-translationally, palmitoylated. In natural infection, inactive HA is matured into HA1 and HA2 outside the cell by one or more trypsin-like, arginine-specific endoprotease secreted by the bronchial epithelial cells. One identified protease that may be involved in this process is secreted in lungs by club cells.

It is found in the virion membrane. Its subcellular location is the host apical cell membrane. Functionally, binds to sialic acid-containing receptors on the cell surface, bringing about the attachment of the virus particle to the cell. This attachment induces virion internalization of about two third of the virus particles through clathrin-dependent endocytosis and about one third through a clathrin- and caveolin-independent pathway. Plays a major role in the determination of host range restriction and virulence. Class I viral fusion protein. Responsible for penetration of the virus into the cell cytoplasm by mediating the fusion of the membrane of the endocytosed virus particle with the endosomal membrane. Low pH in endosomes induces an irreversible conformational change in HA2, releasing the fusion hydrophobic peptide. Several trimers are required to form a competent fusion pore. Its function is as follows. Binds to sialic acid-containing receptors on the cell surface, bringing about the attachment of the virus particle to the cell. This attachment induces virion internalization either through clathrin-dependent endocytosis or through clathrin- and caveolin-independent pathway. Plays a major role in the determination of host range restriction and virulence. Class I viral fusion protein. Responsible for penetration of the virus into the cell cytoplasm by mediating the fusion of the membrane of the endocytosed virus particle with the endosomal membrane. Low pH in endosomes induces an irreversible conformational change in HA2, releasing the fusion hydrophobic peptide. Several trimers are required to form a competent fusion pore. In Influenza A virus (strain A/Equine/C.Detroit/1/1964 H7N7), this protein is Hemagglutinin.